Here is a 490-residue protein sequence, read N- to C-terminus: Probable glycine dehydrogenase (decarboxylating) subunit 2 (490 aa).

Lys-273 is subject to N6-(pyridoxal phosphate)lysine.

This sequence belongs to the GcvP family. C-terminal subunit subfamily. In terms of assembly, the glycine cleavage system is composed of four proteins: P, T, L and H. In this organism, the P 'protein' is a heterodimer of two subunits. Requires pyridoxal 5'-phosphate as cofactor.

The catalysed reaction is N(6)-[(R)-lipoyl]-L-lysyl-[glycine-cleavage complex H protein] + glycine + H(+) = N(6)-[(R)-S(8)-aminomethyldihydrolipoyl]-L-lysyl-[glycine-cleavage complex H protein] + CO2. In terms of biological role, the glycine cleavage system catalyzes the degradation of glycine. The P protein binds the alpha-amino group of glycine through its pyridoxal phosphate cofactor; CO(2) is released and the remaining methylamine moiety is then transferred to the lipoamide cofactor of the H protein. This is Probable glycine dehydrogenase (decarboxylating) subunit 2 from Staphylococcus aureus (strain MRSA252).